The sequence spans 931 residues: Protocadherin gamma-A1 (931 aa).

The signal sequence occupies residues 1 to 28 (MKIQKKLTGCSRLMLLCLSLELLLEAGA). Cadherin domains follow at residues 29–133 (GNIH…TPQF), 134–242 (QLEE…PPAF), 243–347 (TQAQ…APEV), 348–452 (TITS…SPVF), 453–562 (HQDS…APEI), and 570–682 (DGST…EPSA). The Extracellular portion of the chain corresponds to 29-692 (GNIHYSVPEE…KPNDSDLTLY (664 aa)). Residues N265, N419, and N545 are each glycosylated (N-linked (GlcNAc...) asparagine). N685 carries N-linked (GlcNAc...) asparagine glycosylation. Residues 693–713 (LVVAAAAVSCVFLAFVIVLLA) traverse the membrane as a helical segment. The Cytoplasmic segment spans residues 714 to 931 (HRLRRWHKSR…KKKSGKKEKK (218 aa)). Disordered regions lie at residues 801–840 (KKEPFSQQAPPNTDWRFSQAQRPGTSGSQNGDDTGTWPNN) and 901–931 (ATLTNAAGKRDGKAPAGGNGNKKKSGKKEKK). Residues 805–840 (FSQQAPPNTDWRFSQAQRPGTSGSQNGDDTGTWPNN) are compositionally biased toward polar residues. A compositionally biased stretch (basic residues) spans 921 to 931 (NKKKSGKKEKK).

It localises to the cell membrane. In terms of biological role, potential calcium-dependent cell-adhesion protein. May be involved in the establishment and maintenance of specific neuronal connections in the brain. This chain is Protocadherin gamma-A1 (PCDHGA1), found in Homo sapiens (Human).